Here is a 238-residue protein sequence, read N- to C-terminus: Sugar fermentation stimulation protein homolog (238 aa).

Belongs to the SfsA family.

This is Sugar fermentation stimulation protein homolog from Bartonella tribocorum (strain CIP 105476 / IBS 506).